The chain runs to 105 residues: uncharacterized protein (105 aa).

The protein belongs to the asfivirus C122R family.

The protein localises to the virion. This is an uncharacterized protein from African swine fever virus (strain Badajoz 1971 Vero-adapted) (Ba71V).